A 122-amino-acid chain; its full sequence is Lycotoxin-Pa4a (122 aa).

The first 20 residues, 1–20 (MKLGIFFSVFFLAMIHSCLS), serve as a signal peptide directing secretion. Positions 21 to 47 (ETNEDKNLESYFREDDLKALSFGEYAR) are excised as a propeptide. Disulfide bonds link C58-C73, C65-C82, C72-C100, and C84-C98.

Belongs to the neurotoxin 19 (CSTX) family. In terms of tissue distribution, expressed by the venom gland.

The protein localises to the secreted. Its subcellular location is the target cell membrane. In terms of biological role, potent antibacterial peptide with anti-inflammatory properties. Inhibits both Gram-negative and Gram-positive bacteria by disrupting both the outer membrane and the cytosolic membrane of bacteria. Also downregulates the expression of pro-inflammatory mediators (cyclooxygenase-2 (PTGS2/COX2), nitric oxide-induced synthase (NOS2), IL-1 beta (IL1B), TNF-alpha (TNF)) and upregulates the level of anti-inflammatory cytokine (IL10) by inactivating mitogen-activated protein kinase signaling in a lipopolysaccharide-stimulated murine macrophage cell line. This Pardosa astrigera (Wolf spider) protein is Lycotoxin-Pa4a.